The following is a 443-amino-acid chain: ATP-dependent protease ATPase subunit HslU (443 aa).

Residues Ile20, 62–67 (GVGKTE), Asp255, Glu321, and Arg393 each bind ATP.

Belongs to the ClpX chaperone family. HslU subfamily. A double ring-shaped homohexamer of HslV is capped on each side by a ring-shaped HslU homohexamer. The assembly of the HslU/HslV complex is dependent on binding of ATP.

It localises to the cytoplasm. In terms of biological role, ATPase subunit of a proteasome-like degradation complex; this subunit has chaperone activity. The binding of ATP and its subsequent hydrolysis by HslU are essential for unfolding of protein substrates subsequently hydrolyzed by HslV. HslU recognizes the N-terminal part of its protein substrates and unfolds these before they are guided to HslV for hydrolysis. In Helicobacter pylori (strain ATCC 700392 / 26695) (Campylobacter pylori), this protein is ATP-dependent protease ATPase subunit HslU.